Reading from the N-terminus, the 151-residue chain is 3-hydroxyacyl-[acyl-carrier-protein] dehydratase FabZ (151 aa).

His54 is a catalytic residue.

It belongs to the thioester dehydratase family. FabZ subfamily.

Its subcellular location is the cytoplasm. The catalysed reaction is a (3R)-hydroxyacyl-[ACP] = a (2E)-enoyl-[ACP] + H2O. Involved in unsaturated fatty acids biosynthesis. Catalyzes the dehydration of short chain beta-hydroxyacyl-ACPs and long chain saturated and unsaturated beta-hydroxyacyl-ACPs. The chain is 3-hydroxyacyl-[acyl-carrier-protein] dehydratase FabZ from Blochmanniella pennsylvanica (strain BPEN).